The primary structure comprises 287 residues: UPF0354 protein SSP1020 (287 aa).

It belongs to the UPF0354 family.

This is UPF0354 protein SSP1020 from Staphylococcus saprophyticus subsp. saprophyticus (strain ATCC 15305 / DSM 20229 / NCIMB 8711 / NCTC 7292 / S-41).